The sequence spans 39 residues: Basic phospholipase A2 (39 aa).

The Ca(2+) site is built by Tyr-27, Gly-29, and Gly-31.

It belongs to the phospholipase A2 family. Group II subfamily. D49 sub-subfamily. Ca(2+) serves as cofactor. In terms of tissue distribution, expressed by the venom gland.

Its subcellular location is the secreted. The enzyme catalyses a 1,2-diacyl-sn-glycero-3-phosphocholine + H2O = a 1-acyl-sn-glycero-3-phosphocholine + a fatty acid + H(+). Its activity is regulated as follows. Is selectively inhibited by the gamma-phospholipase A2 inhibitor (PLI) CgMIP-I (AC P0DQP7) but not by the alpha-PLI CgMIP-II (AC P0DQP8). Its function is as follows. Snake venom phospholipase A2 (PLA2) that shows high myotoxic activities, induces mild edema, and shows cytolytic, and anti-coagulant activities, as well as intracerebral lethal effect. Does not induce lethality at a dose of 5 ug/g, when intravenously injected into mice. PLA2 catalyzes the calcium-dependent hydrolysis of the 2-acyl groups in 3-sn-phosphoglycerides. The protein is Basic phospholipase A2 of Cerrophidion godmani (Porthidium godmani).